A 330-amino-acid polypeptide reads, in one-letter code: Protein qutG (330 aa).

Glutamate 78, aspartate 100, leucine 102, aspartate 103, and aspartate 251 together coordinate Mg(2+). Residue glutamate 78 coordinates substrate. Substrate contacts are provided by residues 102–105 (LDGT) and aspartate 251.

The protein belongs to the inositol monophosphatase superfamily.

Its function is as follows. Not known. Probably involved in quinate metabolism. This Emericella nidulans (strain FGSC A4 / ATCC 38163 / CBS 112.46 / NRRL 194 / M139) (Aspergillus nidulans) protein is Protein qutG (qutG).